The following is a 380-amino-acid chain: Glucose-1-phosphate adenylyltransferase (380 aa).

Residues Gly164, 179 to 180, and Ser190 each bind alpha-D-glucose 1-phosphate; that span reads EK.

Belongs to the bacterial/plant glucose-1-phosphate adenylyltransferase family. As to quaternary structure, homotetramer.

It catalyses the reaction alpha-D-glucose 1-phosphate + ATP + H(+) = ADP-alpha-D-glucose + diphosphate. Its pathway is glycan biosynthesis; glycogen biosynthesis. Involved in the biosynthesis of ADP-glucose, a building block required for the elongation reactions to produce glycogen. Catalyzes the reaction between ATP and alpha-D-glucose 1-phosphate (G1P) to produce pyrophosphate and ADP-Glc. The sequence is that of Glucose-1-phosphate adenylyltransferase from Lactococcus lactis subsp. cremoris (strain SK11).